Consider the following 138-residue polypeptide: Putative pre-16S rRNA nuclease (138 aa).

This sequence belongs to the YqgF nuclease family.

The protein resides in the cytoplasm. In terms of biological role, could be a nuclease involved in processing of the 5'-end of pre-16S rRNA. The sequence is that of Putative pre-16S rRNA nuclease from Listeria monocytogenes serotype 4b (strain CLIP80459).